Reading from the N-terminus, the 217-residue chain is DNA-binding transcriptional activator DevR/DosR (217 aa).

The Response regulatory domain occupies 3 to 119; sequence KVFLVDDHEV…ELARAVKDVG (117 aa). A 4-aspartylphosphate modification is found at aspartate 54. The HTH luxR-type domain maps to 143 to 208; it reads KQDPLSGLTD…QAAVFATELK (66 aa). Residues 167 to 186 constitute a DNA-binding region (H-T-H motif); that stretch reads NKQIADRMFLAEKTVKNYVS. 2 positions are modified to phosphothreonine; by PknH: threonine 198 and threonine 205.

As to quaternary structure, homodimer. Interacts with NarL. In terms of processing, phosphorylated on Asp-54 by both DevS (DosS) and DosT. Phosphorylated on Thr-198 and Thr-205 by PknH, which enhances DevR dimerization. Aspartate phosphorylation and threonine phosphorylation cooperatively enhance DevR binding to DNA.

It localises to the cytoplasm. Its subcellular location is the host cytoplasmic vesicle. The protein localises to the host phagosome. Member of the two-component regulatory system DevR/DevS (also called DosR/DosS) involved in onset of the dormancy response. Regulates an approximately 48-member regulon. When phosphorylated binds and activates the promoter of DevR regulon genes in response to hypoxia. The presence of target DNA increases stability of phospho-DevR in vitro. Activates its own transcription under hypoxic but not aerobic conditions, probably binds as a dimer to tandem binding sites within the devR and hspX promoters. Accepts a phosphate group from DevS (DosS) and from DosT. Does not regulate transcription of dosT. The polypeptide is DNA-binding transcriptional activator DevR/DosR (Mycobacterium tuberculosis (strain ATCC 25618 / H37Rv)).